Reading from the N-terminus, the 145-residue chain is Hemoglobin subunit beta (145 aa).

The Globin domain occupies 1–145; the sequence is MLTAEEKAAV…VANALAHRYH (145 aa). Threonine 11 carries the phosphothreonine modification. An N6-acetyllysine modification is found at lysine 58. Histidine 62 is a binding site for heme b. Residue lysine 81 is modified to N6-acetyllysine. Histidine 91 lines the heme b pocket. Cysteine 92 carries the S-nitrosocysteine modification.

This sequence belongs to the globin family. Heterotetramer of two alpha chains and two beta chains. Red blood cells.

Functionally, involved in oxygen transport from the lung to the various peripheral tissues. This is Hemoglobin subunit beta (HBB) from Ovis aries musimon (Mouflon).